Reading from the N-terminus, the 168-residue chain is Peptide methionine sulfoxide reductase MsrA 2 (168 aa).

Cys11 is a catalytic residue.

Belongs to the MsrA Met sulfoxide reductase family.

The enzyme catalyses L-methionyl-[protein] + [thioredoxin]-disulfide + H2O = L-methionyl-(S)-S-oxide-[protein] + [thioredoxin]-dithiol. The catalysed reaction is [thioredoxin]-disulfide + L-methionine + H2O = L-methionine (S)-S-oxide + [thioredoxin]-dithiol. Functionally, has an important function as a repair enzyme for proteins that have been inactivated by oxidation. Catalyzes the reversible oxidation-reduction of methionine sulfoxide in proteins to methionine. The chain is Peptide methionine sulfoxide reductase MsrA 2 from Rhodopirellula baltica (strain DSM 10527 / NCIMB 13988 / SH1).